Reading from the N-terminus, the 320-residue chain is Heterogeneous nuclear ribonucleoprotein A1-like 3 (320 aa).

RRM domains are found at residues 14 to 97 and 105 to 184; these read RKLF…DSQR and KKIF…LSKQ. 2 disordered regions span residues 182–218 and 271–320; these read SKQE…NFGR and SNFG…GRRF. Positions 197–218 are enriched in gly residues; sequence SGSGNFGGGRGGGFGGNDNFGR. The segment covering 308-320 has biased composition (low complexity); the sequence is SSSSSSYGSGRRF.

The polypeptide is Heterogeneous nuclear ribonucleoprotein A1-like 3 (Homo sapiens (Human)).